Consider the following 33-residue polypeptide: MSDIN-like toxin proprotein 6 (33 aa).

Positions 1–10 (MSDINATRLP) are excised as a propeptide. Residues 11-20 (LILLAALGIP) constitute a cross-link (cyclopeptide (Leu-Pro)). A propeptide spanning residues 21-33 (SDDADSTLTRGER) is cleaved from the precursor.

Belongs to the MSDIN fungal toxin family. Post-translationally, processed by the macrocyclase-peptidase enzyme POPB to yield a toxic cyclic decapeptide. POPB first removes 10 residues from the N-terminus. Conformational trapping of the remaining peptide forces the enzyme to release this intermediate rather than proceed to macrocyclization. The enzyme rebinds the remaining peptide in a different conformation and catalyzes macrocyclization of the N-terminal 10 residues.

In terms of biological role, probable toxin that belongs to the MSDIN-like toxin family responsible for a large number of food poisoning cases and deaths. This is MSDIN-like toxin proprotein 6 from Amanita phalloides (Death cap).